The following is a 466-amino-acid chain: MAKGASISGFPEWLPSERVVEQRVIDTLRKVFELNGFIGIETRAVETGASLLKKGETSKEIYLLSRLQEVGHESDTPIEERLGLHFDLTVPLSRYVVEHSGALAFPFKRWQIQKVWRGERPQEGRFREFVQADIDVIGAGDLPDHYEVELPLVMVSALEELRAYGLPKATVHANNRKLSEGFYRGLGLTDVEGVLREIDKLDKIGADEVARLLTETCGATEAQARACLELAELTASDGAELAAKFDALCEAHGIVKDSEAYTLARQGLDTLAMIVDEAAAIRPGSVIADLKIARGLDYYTGSVYETFLDGAASLGSICSGGRYDNLASQGNRKYPGVGLSIGLSRLVSYMLHTAGAHANRVSPAAVLVAVWNEEDRPAANRIANQLRARGIATDVAPTAAKLGKQIKYADKLGIPYVWFPATAAEGAEGAEPAGDEVKNIVTGEQVAADCTSWEPDTVVAQQTVEI.

Belongs to the class-II aminoacyl-tRNA synthetase family. As to quaternary structure, homodimer.

The protein localises to the cytoplasm. It carries out the reaction tRNA(His) + L-histidine + ATP = L-histidyl-tRNA(His) + AMP + diphosphate + H(+). The sequence is that of Histidine--tRNA ligase (hisS) from Bifidobacterium longum (strain NCC 2705).